The sequence spans 199 residues: 7-methyl-GTP pyrophosphatase (199 aa).

Asp76 (proton acceptor) is an active-site residue.

The protein belongs to the Maf family. YceF subfamily. It depends on a divalent metal cation as a cofactor.

The protein localises to the cytoplasm. It carries out the reaction N(7)-methyl-GTP + H2O = N(7)-methyl-GMP + diphosphate + H(+). In terms of biological role, nucleoside triphosphate pyrophosphatase that hydrolyzes 7-methyl-GTP (m(7)GTP). May have a dual role in cell division arrest and in preventing the incorporation of modified nucleotides into cellular nucleic acids. The chain is 7-methyl-GTP pyrophosphatase from Rhizobium johnstonii (strain DSM 114642 / LMG 32736 / 3841) (Rhizobium leguminosarum bv. viciae).